Reading from the N-terminus, the 71-residue chain is Mitotic-spindle organizing protein 1B (71 aa).

This sequence belongs to the MOZART1 family. Homo- and heteromultimer. Part of the gamma-tubulin complex. Interacts with TUBB2/TUBB3, GIP2, GCP3 and TSA1 (via C-terminal domain). As to expression, mostly expressed in siliques and flowers, and, to a lower extent, in leaves, roots and seedlings, with highest levels in young tissues and meristematic cells, and the vasculature.

It localises to the cytoplasm. The protein resides in the cytoskeleton. The protein localises to the microtubule organizing center. Its subcellular location is the spindle. It is found in the nucleus. It localises to the phragmoplast. The protein resides in the nucleus envelope. Functionally, required for gamma-tubulin complex recruitment to the microtubule organizing centers (MTOCs). During mitosis, modulates gamma-tubulin complex localization, spindle stability and chromosomal segregation. Necessary for gametophyte development and embryogenesis. The protein is Mitotic-spindle organizing protein 1B (GIP1) of Arabidopsis thaliana (Mouse-ear cress).